The primary structure comprises 259 residues: tRNA (guanine-N(1)-)-methyltransferase (259 aa).

Residues Gly117 and 137–142 (LGDFVL) contribute to the S-adenosyl-L-methionine site.

The protein belongs to the RNA methyltransferase TrmD family. In terms of assembly, homodimer.

It localises to the cytoplasm. It carries out the reaction guanosine(37) in tRNA + S-adenosyl-L-methionine = N(1)-methylguanosine(37) in tRNA + S-adenosyl-L-homocysteine + H(+). In terms of biological role, specifically methylates guanosine-37 in various tRNAs. The chain is tRNA (guanine-N(1)-)-methyltransferase from Polaromonas sp. (strain JS666 / ATCC BAA-500).